The sequence spans 372 residues: Cytochrome b (372 aa).

4 helical membrane passes run 25-45 (FGSM…FLAV), 69-90 (WMMQ…YIHM), 105-125 (WLSG…GYVL), and 170-190 (FFAL…LHIM). Residues H75 and H89 each coordinate heme b. 2 residues coordinate heme b: H174 and H188. Residue H193 participates in a ubiquinone binding. The next 4 membrane-spanning stretches (helical) occupy residues 218–238 (YKDL…ISFL), 280–300 (LGGA…PFTH), 312–332 (FMQL…WTAT), and 339–358 (YTTI…MSNL).

It belongs to the cytochrome b family. As to quaternary structure, the cytochrome bc1 complex contains 3 respiratory subunits (MT-CYB, CYC1 and UQCRFS1), 2 core proteins (UQCRC1 and UQCRC2) and probably 6 low-molecular weight proteins. It depends on heme b as a cofactor.

The protein localises to the mitochondrion inner membrane. Its function is as follows. Component of the ubiquinol-cytochrome c reductase complex (complex III or cytochrome b-c1 complex) that is part of the mitochondrial respiratory chain. The b-c1 complex mediates electron transfer from ubiquinol to cytochrome c. Contributes to the generation of a proton gradient across the mitochondrial membrane that is then used for ATP synthesis. The protein is Cytochrome b (MT-CYB) of Sanzinia madagascariensis (Madagascar tree boa).